Reading from the N-terminus, the 411-residue chain is AT-hook motif nuclear-localized protein 14 (411 aa).

Disordered stretches follow at residues 1-32 (MDPN…QRLT), 54-164 (ASTG…LGSV), 289-348 (KDAA…HQAG), and 366-411 (THSR…QIPD). Residues 7-19 (HHHHQQQQLHHLH) show a composition bias toward basic residues. Residues 20 to 29 (QQQQQQQQQQ) are compositionally biased toward low complexity. The span at 54–66 (ASTGNAVPSSNNG) shows a compositional bias: polar residues. The Bipartite nuclear localization signal signature appears at 105–113 (KRKRGRPRK). The segment at residues 105-117 (KRKRGRPRKYVTP) is a DNA-binding region (a.T hook). 2 stretches are compositionally biased toward low complexity: residues 120 to 135 (ALAA…SSSA) and 144 to 159 (VTGG…SKKS). The PPC domain occupies 165-305 (GKTGQCFTPH…GKGDASNSGS (141 aa)). Positions 306–315 (RLTSPVSSGQ) are enriched in polar residues. Residues 374–390 (RGGGNSGHDGRGGGGYD) show a composition bias toward gly residues.

The protein resides in the nucleus. Transcription factor that specifically binds AT-rich DNA sequences related to the nuclear matrix attachment regions (MARs). The polypeptide is AT-hook motif nuclear-localized protein 14 (Arabidopsis thaliana (Mouse-ear cress)).